A 240-amino-acid chain; its full sequence is tRNA pseudouridine synthase B (240 aa).

The active-site Nucleophile is the D54.

The protein belongs to the pseudouridine synthase TruB family. Type 1 subfamily.

It carries out the reaction uridine(55) in tRNA = pseudouridine(55) in tRNA. In terms of biological role, responsible for synthesis of pseudouridine from uracil-55 in the psi GC loop of transfer RNAs. The polypeptide is tRNA pseudouridine synthase B (Chlorobaculum tepidum (strain ATCC 49652 / DSM 12025 / NBRC 103806 / TLS) (Chlorobium tepidum)).